An 875-amino-acid polypeptide reads, in one-letter code: Alanine--tRNA ligase (875 aa).

Residues His562, His566, Cys665, and His669 each contribute to the Zn(2+) site.

Belongs to the class-II aminoacyl-tRNA synthetase family. It depends on Zn(2+) as a cofactor.

It is found in the cytoplasm. The enzyme catalyses tRNA(Ala) + L-alanine + ATP = L-alanyl-tRNA(Ala) + AMP + diphosphate. In terms of biological role, catalyzes the attachment of alanine to tRNA(Ala) in a two-step reaction: alanine is first activated by ATP to form Ala-AMP and then transferred to the acceptor end of tRNA(Ala). Also edits incorrectly charged Ser-tRNA(Ala) and Gly-tRNA(Ala) via its editing domain. In Saccharophagus degradans (strain 2-40 / ATCC 43961 / DSM 17024), this protein is Alanine--tRNA ligase.